A 737-amino-acid chain; its full sequence is MAKQVFQTTFAGRELIVETGQVAKQANGSVVVRYGESTVLTAAVMSKKMATGDFFPLQVNYEEKMYAAGKFPGGFMKREGRPSTDATLTARLIDRPIRPMFAEGFRNEVQVINTVLSYDENASAPMAAMFGSSLALSISDIPFDGPIAGVQVGYVDGQIIINPSQEQAEQSLLELTVAGTKHAINMVESGAKELSEEIMLEALLKGHEAVKELIAFQEEIVAAVGKEKAEVELLHVDAELQAEIIAAYNSDLQKAVQVEEKLAREAATQAVKDQVTAVYEEKYANHEEFDRIMRDVAEILEQMEHAEVRRLITEDKVRPDGRKVDEIRPLDAVVDFLPRVHGSGLFTRGQTQALSVLTLAPMGETQIIDGLDPEYKKRFMHHYNFPQYSVGETGRYGAPGRREIGHGALGERALAQVLPSLEEFPYAIRLVAEVLESNGSSSQASICAGTLALMAGGVPIKAPVAGIAMGLISDGNNYTVLTDIQGLEDHFGDMDFKVAGTRDGITALQMDIKIQGITAEILTEALAQAKKARFEILDVIEATIPEVRPELAPTAPKIDTIKIDVDKIKIVIGKGGETIDKIIAETGVKIDIDEEGNVSIYSSDQDAINRAKEIIAGLVREAKVDEVYRAKVVRIEKFGAFVNLFDKTDALVHISEMAWTRTNRVEDLVEIGDEVDVKVIKIDEKGRIDASMKALLPRPPKPEHDEKGEKSERPHRPRHQKDYKPKKEFTETPKDSE.

Residues D489 and D495 each contribute to the Mg(2+) site. Residues P556 to I615 form the KH domain. Residues D625–K693 form the S1 motif domain. Residues S691–E737 are disordered. Basic and acidic residues predominate over residues P700–E737.

It belongs to the polyribonucleotide nucleotidyltransferase family. It depends on Mg(2+) as a cofactor.

Its subcellular location is the cytoplasm. The catalysed reaction is RNA(n+1) + phosphate = RNA(n) + a ribonucleoside 5'-diphosphate. Its function is as follows. Involved in mRNA degradation. Catalyzes the phosphorolysis of single-stranded polyribonucleotides processively in the 3'- to 5'-direction. In Streptococcus pneumoniae serotype 2 (strain D39 / NCTC 7466), this protein is Polyribonucleotide nucleotidyltransferase.